A 79-amino-acid polypeptide reads, in one-letter code: Conotoxin Cal9.2a (79 aa).

Residues 1–23 (MNCYLILTVALLLTSAMTGTTTA) form the signal peptide. A propeptide spanning residues 24-33 (GQLNKKGVTL) is cleaved from the precursor. 3 disulfides stabilise this stretch: Cys41/Cys58, Cys46/Cys68, and Cys48/Cys73.

As to expression, expressed by the venom duct.

The protein localises to the secreted. Probable neurotoxin with unknown target. Possibly targets ion channels. The chain is Conotoxin Cal9.2a from Californiconus californicus (California cone).